The chain runs to 119 residues: Acidic phospholipase A2 E (119 aa).

Intrachain disulfides connect Cys11-Cys71, Cys26-Cys118, Cys28-Cys44, Cys43-Cys99, Cys50-Cys92, Cys60-Cys85, and Cys78-Cys90. Ca(2+)-binding residues include Tyr27, Gly29, and Gly31. His47 is an active-site residue. A Ca(2+)-binding site is contributed by Asp48. Asp93 is an active-site residue.

The protein belongs to the phospholipase A2 family. Group I subfamily. D49 sub-subfamily. It depends on Ca(2+) as a cofactor. Expressed by the venom gland.

The protein localises to the secreted. The enzyme catalyses a 1,2-diacyl-sn-glycero-3-phosphocholine + H2O = a 1-acyl-sn-glycero-3-phosphocholine + a fatty acid + H(+). Functionally, PLA2 catalyzes the calcium-dependent hydrolysis of the 2-acyl groups in 3-sn-phosphoglycerides. The sequence is that of Acidic phospholipase A2 E from Naja oxiana (Central Asian cobra).